Consider the following 303-residue polypeptide: Diaminopimelate epimerase (303 aa).

Positions 15, 47, and 67 each coordinate substrate. Cysteine 76 functions as the Proton donor in the catalytic mechanism. Residues 77-78 (GN), asparagine 163, asparagine 197, and 215-216 (ER) contribute to the substrate site. The Proton acceptor role is filled by cysteine 224. A substrate-binding site is contributed by 225–226 (GS). The disordered stretch occupies residues 278 to 303 (FDPATGEWSRDTQGLQGSGNADRGAA).

It belongs to the diaminopimelate epimerase family. In terms of assembly, homodimer.

It localises to the cytoplasm. The enzyme catalyses (2S,6S)-2,6-diaminopimelate = meso-2,6-diaminopimelate. It participates in amino-acid biosynthesis; L-lysine biosynthesis via DAP pathway; DL-2,6-diaminopimelate from LL-2,6-diaminopimelate: step 1/1. Its function is as follows. Catalyzes the stereoinversion of LL-2,6-diaminopimelate (L,L-DAP) to meso-diaminopimelate (meso-DAP), a precursor of L-lysine and an essential component of the bacterial peptidoglycan. This is Diaminopimelate epimerase from Brucella abortus (strain S19).